The sequence spans 188 residues: Threonylcarbamoyl-AMP synthase (188 aa).

Positions 8–188 constitute a YrdC-like domain; that stretch reads EGAQPGLHAY…DLATGKILRA (181 aa).

This sequence belongs to the SUA5 family. TsaC subfamily.

It is found in the cytoplasm. The catalysed reaction is L-threonine + hydrogencarbonate + ATP = L-threonylcarbamoyladenylate + diphosphate + H2O. Functionally, required for the formation of a threonylcarbamoyl group on adenosine at position 37 (t(6)A37) in tRNAs that read codons beginning with adenine. Catalyzes the conversion of L-threonine, HCO(3)(-)/CO(2) and ATP to give threonylcarbamoyl-AMP (TC-AMP) as the acyladenylate intermediate, with the release of diphosphate. The polypeptide is Threonylcarbamoyl-AMP synthase (Thiobacillus denitrificans (strain ATCC 25259 / T1)).